A 389-amino-acid polypeptide reads, in one-letter code: tRNA pseudouridine synthase Pus10 (389 aa).

D213 acts as the Nucleophile in catalysis. Residues Y278 and Y350 each contribute to the substrate site.

This sequence belongs to the pseudouridine synthase Pus10 family.

It catalyses the reaction uridine(54) in tRNA = pseudouridine(54) in tRNA. The enzyme catalyses uridine(55) in tRNA = pseudouridine(55) in tRNA. Functionally, responsible for synthesis of pseudouridine from uracil-54 and uracil-55 in the psi GC loop of transfer RNAs. The chain is tRNA pseudouridine synthase Pus10 from Thermoplasma acidophilum (strain ATCC 25905 / DSM 1728 / JCM 9062 / NBRC 15155 / AMRC-C165).